The primary structure comprises 1238 residues: ATP-dependent helicase/nuclease subunit A (1238 aa).

Positions 6–474 (TKWTETQKSA…IKLSENFRSR (469 aa)) constitute a UvrD-like helicase ATP-binding domain. 27 to 34 (AGAGTGKT) serves as a coordination point for ATP. One can recognise a UvrD-like helicase C-terminal domain in the interval 512–811 (PFEGNCGGDV…RIMSIHKSKG (300 aa)).

It belongs to the helicase family. AddA subfamily. Heterodimer of AddA and AddB/RexB. The cofactor is Mg(2+).

The catalysed reaction is Couples ATP hydrolysis with the unwinding of duplex DNA by translocating in the 3'-5' direction.. It catalyses the reaction ATP + H2O = ADP + phosphate + H(+). The heterodimer acts as both an ATP-dependent DNA helicase and an ATP-dependent, dual-direction single-stranded exonuclease. Recognizes the chi site generating a DNA molecule suitable for the initiation of homologous recombination. The AddA nuclease domain is required for chi fragment generation; this subunit has the helicase and 3' -&gt; 5' nuclease activities. The chain is ATP-dependent helicase/nuclease subunit A from Clostridium kluyveri (strain NBRC 12016).